Reading from the N-terminus, the 341-residue chain is Phosphoribosylformylglycinamidine cyclo-ligase (341 aa).

It belongs to the AIR synthase family.

Its subcellular location is the cytoplasm. The enzyme catalyses 2-formamido-N(1)-(5-O-phospho-beta-D-ribosyl)acetamidine + ATP = 5-amino-1-(5-phospho-beta-D-ribosyl)imidazole + ADP + phosphate + H(+). It functions in the pathway purine metabolism; IMP biosynthesis via de novo pathway; 5-amino-1-(5-phospho-D-ribosyl)imidazole from N(2)-formyl-N(1)-(5-phospho-D-ribosyl)glycinamide: step 2/2. The protein is Phosphoribosylformylglycinamidine cyclo-ligase of Xanthomonas oryzae pv. oryzae (strain MAFF 311018).